The primary structure comprises 993 residues: Desmoglein-3 (993 aa).

The N-terminal stretch at 1–23 (MTWLLFRTSGALAILMVLILVHG) is a signal peptide. The propeptide occupies 24-48 (ELRIETKGQHGEDETAIQGRRRYKR). 4 Cadherin domains span residues 48-156 (REWV…APVF), 157-266 (SQSI…FPMF), 267-386 (KESQ…HPAS), and 383-494 (HPAS…CPTV). Topologically, residues 49–617 (EWVKFAKPCR…GKRPSGRLGS (569 aa)) are extracellular. Residues Asn109 and Asn179 are each glycosylated (N-linked (GlcNAc...) asparagine). 2 N-linked (GlcNAc...) asparagine glycosylation sites follow: Asn458 and Asn544. A helical membrane pass occupies residues 618–638 (AAIGLLLLGLLLLLLAPLLLL). The Cytoplasmic portion of the chain corresponds to 639-993 (TCDYGVGPIG…CTEDPCSRLI (355 aa)). Residues 641–713 (DYGVGPIGGV…NTYAGGTVVE (73 aa)) are required for interaction with CTNND1 and localization at cell-cell junctions. Desmoglein repeat repeat units lie at residues 903–929 (LSASSSVLQSATSIPNPVQHGSYMVTE) and 930–960 (TYSASGSLVQPTTTVLEPLLTQNVTVTERVI).

As to quaternary structure, homodimer. Part of a complex that contains DSG3, PKP1, YAP1 and YWHAG; the complex is required for localization of DSG3 and YAP1 to the cell membrane in keratinocytes. Interacts with PKP2. Interacts with CTNND1; the interaction facilitates DSG3 localization and retention at cell-cell junctions. Interacts with CDH1; the interaction is required for CDH1 localization to developing adherens junctions. Interacts with RAC1; the interaction is required for DSG3 translocation to cell-cell junctions, organization of cortical F-actin bundles and actin anchoring at cell-cell junctions. Interacts with DSC3; the interaction may limit the interaction of DSC3 with p38MAPK family members and therefore repress p38MAPK signaling activation.

It localises to the cell membrane. It is found in the cell junction. Its subcellular location is the desmosome. The protein resides in the cytoplasm. The protein localises to the tight junction. A component of desmosome cell-cell junctions which are required for positive regulation of cellular adhesion. Required for adherens and desmosome junction assembly in response to mechanical force in keratinocytes. Required for desmosome-mediated cell-cell adhesion of cells surrounding the telogen hair club and the basal layer of the outer root sheath epithelium, consequently is essential for the anchoring of telogen hairs in the hair follicle. Required for the maintenance of the epithelial barrier via promoting desmosome-mediated intercellular attachment of suprabasal epithelium to basal cells. May play a role in the protein stability of the desmosome plaque components DSP, JUP, PKP1, PKP2 and PKP3. Required for YAP1 localization at the plasma membrane in keratinocytes in response to mechanical strain, via the formation of an interaction complex composed of DSG3, PKP1 and YWHAG. May also be involved in the positive regulation of YAP1 target gene transcription and as a result cell proliferation. Positively regulates cellular contractility and cell junction formation via organization of cortical F-actin bundles and anchoring of actin to tight junctions, in conjunction with RAC1. The cytoplasmic pool of DSG3 is required for the localization of CDH1 and CTNNB1 at developing adherens junctions, potentially via modulation of SRC activity. Inhibits keratinocyte migration via suppression of p38MAPK signaling, may therefore play a role in moderating wound healing. The chain is Desmoglein-3 (DSG3) from Canis lupus familiaris (Dog).